A 636-amino-acid chain; its full sequence is Protein cueball (636 aa).

Positions 1-27 (MKLCTSQQFGVAVLFIVLNICSPLADA) are cleaved as a signal peptide. Residues 28-517 (SPIAWDFAVT…ADGPSSLRSG (490 aa)) lie on the Extracellular side of the membrane. N-linked (GlcNAc...) asparagine glycans are attached at residues asparagine 83 and asparagine 109. 3 LDL-receptor class B repeats span residues 122–169 (RNLF…DICR), 170–214 (RQLY…DQLS), and 215–260 (DRIF…TEDT). A glycan (N-linked (GlcNAc...) asparagine) is linked at asparagine 190. N-linked (GlcNAc...) asparagine glycosylation is found at asparagine 285 and asparagine 339. 2 EGF-like domains span residues 350–384 (RMDA…ARCE) and 419–456 (EYYK…TRCE). 5 disulfide bridges follow: cysteine 359–cysteine 372, cysteine 374–cysteine 383, cysteine 423–cysteine 433, cysteine 427–cysteine 444, and cysteine 446–cysteine 455. N-linked (GlcNAc...) asparagine glycans are attached at residues asparagine 449, asparagine 458, and asparagine 493. A helical transmembrane segment spans residues 518 to 538 (SVIIVLVVGIVSSLALVAVIV). Topologically, residues 539-636 (HGLRLIYKPK…IHNMEDDLLT (98 aa)) are cytoplasmic.

This sequence belongs to the cueball family.

Its subcellular location is the cell membrane. Its function is as follows. Has a role in spermatogenesis and oogenesis. In Drosophila virilis (Fruit fly), this protein is Protein cueball.